Reading from the N-terminus, the 442-residue chain is MKLQGVRALVVGMRKSGVASAEFLARRGAVVSATDLKPLDELPGVGELGIPFAVQTPAVFEGYDLIVPSPDVPYDLPPLEEARRHGVRVIGEVELAAPFLKGRTIGITGSNGKTTTTSLTGHILREAGVPVQVGGNIGLPVTAMVESSRDDGWNVLELSSFQLETIHEFRAHIGLALNVTQNHLDRHHTFENYAAIKGRLFETQQAGDYAVLNAEDPVCVAYAARTRATVQWFSSRKKVDPGATLCGNKLVLFGKLLMEAGEIPIRGRHNIENVLAAAIAASRAGVEHAAIAAAVRSFRAVEHRLEFVRKLNGVDFYNDSKATSVDATLKALDAFPGGLWVILGGKDKGLDYAALREPLTEKARAALLIGAAAGKIAEQIAGAVPLVDAKTLDGAVRHAFAHAAPGDTVLLAPACASFDQFKSYEHRGETFKQIVNGLEPKD.

109–115 (GSNGKTT) provides a ligand contact to ATP.

Belongs to the MurCDEF family.

The protein resides in the cytoplasm. It catalyses the reaction UDP-N-acetyl-alpha-D-muramoyl-L-alanine + D-glutamate + ATP = UDP-N-acetyl-alpha-D-muramoyl-L-alanyl-D-glutamate + ADP + phosphate + H(+). It functions in the pathway cell wall biogenesis; peptidoglycan biosynthesis. Its function is as follows. Cell wall formation. Catalyzes the addition of glutamate to the nucleotide precursor UDP-N-acetylmuramoyl-L-alanine (UMA). The protein is UDP-N-acetylmuramoylalanine--D-glutamate ligase of Solibacter usitatus (strain Ellin6076).